We begin with the raw amino-acid sequence, 312 residues long: Isethionate sulfite-lyase activating enzyme (312 aa).

The region spanning 20 to 304 (HDGPGIRTIV…GLQKTALDIL (285 aa)) is the Radical SAM core domain. Cys-34, Cys-38, Cys-41, Cys-60, Cys-66, Cys-69, Cys-73, Cys-93, Cys-96, Cys-100, and Cys-104 together coordinate [4Fe-4S] cluster. Residue 40 to 42 (WCS) coordinates S-adenosyl-L-methionine. 2 4Fe-4S ferredoxin-type domains span residues 51–83 (AELA…CGDD) and 84–115 (DKPR…YGKK). S-adenosyl-L-methionine contacts are provided by residues Gly-144, 193–195 (DIK), and His-267.

It belongs to the organic radical-activating enzymes family. As to quaternary structure, monomer. [4Fe-4S] cluster serves as cofactor.

The catalysed reaction is glycyl-[protein] + reduced [flavodoxin] + S-adenosyl-L-methionine = glycin-2-yl radical-[protein] + semiquinone [flavodoxin] + 5'-deoxyadenosine + L-methionine + H(+). It participates in organosulfur degradation; alkanesulfonate degradation. Involved in an anaerobic respiration pathway that converts the sulfonate isethionate (2-hydroxyethanesulfonate) to ammonia, acetate and sulfide. Catalyzes activation of the isethionate sulfite-lyase IslA under anaerobic conditions by generation of an organic free radical on a glycine residue, via a homolytic cleavage of S-adenosyl-L-methionine (SAM). The polypeptide is Isethionate sulfite-lyase activating enzyme (Desulfovibrio desulfuricans (strain ATCC 27774 / DSM 6949 / MB)).